The following is a 358-amino-acid chain: 3-dehydroquinate synthase (358 aa).

NAD(+)-binding positions include 104-108, 128-129, lysine 140, lysine 149, and 167-170; these read GVIGD, TT, and FLNT. Zn(2+) is bound by residues glutamate 182, histidine 246, and histidine 260.

This sequence belongs to the sugar phosphate cyclases superfamily. Dehydroquinate synthase family. It depends on Co(2+) as a cofactor. Zn(2+) serves as cofactor. Requires NAD(+) as cofactor.

The protein resides in the cytoplasm. It carries out the reaction 7-phospho-2-dehydro-3-deoxy-D-arabino-heptonate = 3-dehydroquinate + phosphate. The protein operates within metabolic intermediate biosynthesis; chorismate biosynthesis; chorismate from D-erythrose 4-phosphate and phosphoenolpyruvate: step 2/7. Functionally, catalyzes the conversion of 3-deoxy-D-arabino-heptulosonate 7-phosphate (DAHP) to dehydroquinate (DHQ). The protein is 3-dehydroquinate synthase of Staphylococcus carnosus (strain TM300).